Reading from the N-terminus, the 244-residue chain is Flavin-dependent thymidylate synthase (244 aa).

One can recognise a ThyX domain in the interval 7 to 199; the sequence is PRVFLIASWG…PNLARLVWED (193 aa). FAD contacts are provided by residues Ser-60 and 83 to 85; that span reads RHR. DUMP is bound by residues 80–83, 93–95, and Arg-137; these read QFIR and SQR. The ThyX motif motif lies at 83–93; sequence RHRMASYWSES. Residues 153 to 155 and Asn-160 contribute to the FAD site; that span reads NAR. Arg-165 contacts dUMP. Residue Arg-165 is the Involved in ionization of N3 of dUMP, leading to its activation of the active site.

The protein belongs to the thymidylate synthase ThyX family. Homotetramer. FAD serves as cofactor.

The catalysed reaction is dUMP + (6R)-5,10-methylene-5,6,7,8-tetrahydrofolate + NADPH + H(+) = dTMP + (6S)-5,6,7,8-tetrahydrofolate + NADP(+). The protein operates within pyrimidine metabolism; dTTP biosynthesis. Its function is as follows. Catalyzes the reductive methylation of 2'-deoxyuridine-5'-monophosphate (dUMP) to 2'-deoxythymidine-5'-monophosphate (dTMP) while utilizing 5,10-methylenetetrahydrofolate (mTHF) as the methyl donor, and NADPH and FADH(2) as the reductant. The protein is Flavin-dependent thymidylate synthase of Pyrobaculum aerophilum (strain ATCC 51768 / DSM 7523 / JCM 9630 / CIP 104966 / NBRC 100827 / IM2).